The chain runs to 79 residues: Putative defensin-like protein 29 (79 aa).

Positions 1 to 26 (MASSGKCVFLVFLCMVALLAPSEVHA) are cleaved as a signal peptide. Disulfide bonds link Cys-45/Cys-65, Cys-51/Cys-74, and Cys-55/Cys-76.

This sequence belongs to the DEFL family.

It localises to the secreted. In Arabidopsis thaliana (Mouse-ear cress), this protein is Putative defensin-like protein 29.